We begin with the raw amino-acid sequence, 751 residues long: Catalase-peroxidase 2 (751 aa).

The N-terminal stretch at 1–27 is a signal peptide; the sequence is MFKKTVPLLSAVAIAISFSAGTGVANA. Positions 115-238 form a cross-link, tryptophyl-tyrosyl-methioninium (Trp-Tyr) (with M-264); the sequence is WHGAGTYRVQ…LAAVQMGLIY (124 aa). The active-site Proton acceptor is histidine 116. The segment at residues 238–264 is a cross-link (tryptophyl-tyrosyl-methioninium (Tyr-Met) (with W-115)); that stretch reads YVNPEGPNGKPDPLLAAKDIRDTFGRM. Histidine 279 serves as a coordination point for heme b.

Belongs to the peroxidase family. Peroxidase/catalase subfamily. As to quaternary structure, homodimer or homotetramer. It depends on heme b as a cofactor. Post-translationally, formation of the three residue Trp-Tyr-Met cross-link is important for the catalase, but not the peroxidase activity of the enzyme.

The enzyme catalyses H2O2 + AH2 = A + 2 H2O. The catalysed reaction is 2 H2O2 = O2 + 2 H2O. In terms of biological role, bifunctional enzyme with both catalase and broad-spectrum peroxidase activity. The polypeptide is Catalase-peroxidase 2 (Idiomarina loihiensis (strain ATCC BAA-735 / DSM 15497 / L2-TR)).